The following is a 482-amino-acid chain: G-protein coupled receptor 37-like 1 (482 aa).

The N-terminal stretch at 1–25 (MRWLWPLGVSLAVALAAGPERAPRG) is a signal peptide. Disordered regions lie at residues 25-56 (GVWL…AKGL) and 78-119 (PTQP…VQNP). At 26 to 134 (VWLQQGGHQP…ERSYGAYAVL (109 aa)) the chain is on the extracellular side. The span at 40–54 (QPDRSRRGAEREDAK) shows a compositional bias: basic and acidic residues. Asn105 is a glycosylation site (N-linked (GlcNAc...) asparagine). The chain crosses the membrane as a helical span at residues 135–155 (LLALLLFAVGIVGSLAVMCIV). At 156 to 167 (WHSYYLKSAWNS) the chain is on the cytoplasmic side. The chain crosses the membrane as a helical span at residues 168-188 (VLASLALWDFLVLFFCLPVVT). The Extracellular portion of the chain corresponds to 189–205 (FHEITKQRLLGAVSCRA). Cys203 and Cys286 are oxidised to a cystine. Residues 206 to 226 (VPFVEVSSLGVTTFSLCALGI) form a helical membrane-spanning segment. Topologically, residues 227–251 (DRFHVATSTLPKARPIEPCPSILAK) are cytoplasmic. The chain crosses the membrane as a helical span at residues 252-272 (LAVIWVGSMTLAAPELLLWQL). At 273-310 (VREPSPAAGTVDTCIMKPSAHLPESLYSLVLTYQNARM) the chain is on the extracellular side. The chain crosses the membrane as a helical span at residues 311 to 331 (WWSFGCYFCLPVLFTVTCQLV). At 332 to 361 (TWRVRGTPGRKPESRPGPQEPRGARPSSTV) the chain is on the cytoplasmic side. Residues 338–358 (TPGRKPESRPGPQEPRGARPS) form a disordered region. Residues 362 to 382 (AGLAAVHALCALPENVCNVVA) traverse the membrane as a helical segment. The Extracellular portion of the chain corresponds to 383–398 (AYLSAALTRQTLELLG). The chain crosses the membrane as a helical span at residues 399–419 (LVTQFSTFFKAALTPLLLLCV). Over 420-482 (SRPLGRAFLD…PPLLALGTPC (63 aa)) the chain is Cytoplasmic. A Phosphothreonine modification is found at Thr480.

Belongs to the G-protein coupled receptor 1 family. In terms of assembly, interacts with the PTCH1 receptor. In terms of processing, undergoes metalloprotease-mediated cleavage which reduces its constitutive activity. Post-translationally, ubiquitinated.

It is found in the cell membrane. The protein resides in the cell projection. It localises to the cilium membrane. Its function is as follows. G-protein coupled receptor. Has been shown to bind the neuroprotective and glioprotective factor prosaposin (PSAP), leading to endocytosis followed by an ERK phosphorylation cascade. However, other studies have shown that prosaposin does not increase activity. It has been suggested that GPR37L1 is a constitutively active receptor which signals through the guanine nucleotide-binding protein G(s) subunit alpha. Participates in the regulation of postnatal cerebellar development by modulating the Shh pathway. Regulates baseline blood pressure in females and protects against cardiovascular stress in males. Mediates inhibition of astrocyte glutamate transporters and reduction in neuronal N-methyl-D-aspartate receptor activity. The protein is G-protein coupled receptor 37-like 1 (GPR37L1) of Bos taurus (Bovine).